We begin with the raw amino-acid sequence, 816 residues long: Probable E3 ubiquitin-protein ligase hulA (816 aa).

In terms of domain architecture, C2 spans 1–112; sequence MGSNLPAQPN…QMGGDEMLTR (112 aa). Disordered stretches follow at residues 134–238 and 254–354; these read NLST…GWER and RTTT…YFVD. Positions 160–178 are enriched in low complexity; sequence VPQVAPSSSHPAASGAAPV. Residues 181-192 show a composition bias toward polar residues; the sequence is SASNPSLNPQRV. Over residues 193–213 the composition is skewed to low complexity; it reads PSTTRPSSTAAPASAAGAAAS. Composition is skewed to polar residues over residues 214 to 227 and 254 to 267; these read NTHG…SFED and RTTT…NYNE. A WW 1 domain is found at 230 to 263; sequence GRLPAGWERREDNLGRTYYVDHNTRTTTWTRPSS. Over residues 268-295 the composition is skewed to basic and acidic residues; it reads HAQRSQREANMQLERRAHQSRMLPEDRT. A compositionally biased stretch (polar residues) spans 296 to 310; the sequence is GANSPNLPESSQQAH. The segment covering 325 to 334 has biased composition (low complexity); it reads ATGATTAGTG. 2 consecutive WW domains span residues 334-367 and 394-427; these read GELP…DPRR and GPLP…DPRL. The HECT domain maps to 483–816; it reads SASDLKKRLM…VEETLGFGQE (334 aa). Residue cysteine 784 is the Glycyl thioester intermediate of the active site.

It belongs to the RSP5/NEDD4 family. Interacts with creD.

The protein resides in the cytoplasm. It carries out the reaction S-ubiquitinyl-[E2 ubiquitin-conjugating enzyme]-L-cysteine + [acceptor protein]-L-lysine = [E2 ubiquitin-conjugating enzyme]-L-cysteine + N(6)-ubiquitinyl-[acceptor protein]-L-lysine.. The protein operates within protein modification; protein ubiquitination. Its function is as follows. E3 ubiquitin-protein ligase which accepts ubiquitin from an E2 ubiquitin-conjugating enzyme in the form of a thioester and then directly transfers the ubiquitin to targeted substrates. Probably involved in the regulatory network controlling carbon source utilization. This is Probable E3 ubiquitin-protein ligase hulA (hulA) from Neosartorya fischeri (strain ATCC 1020 / DSM 3700 / CBS 544.65 / FGSC A1164 / JCM 1740 / NRRL 181 / WB 181) (Aspergillus fischerianus).